Reading from the N-terminus, the 261-residue chain is Claudin-18 (261 aa).

Residues 1–6 (MSTTRC) are Cytoplasmic-facing. Residues 7–27 (QVVGFLLSILGLAGCIVATEM) traverse the membrane as a helical segment. Residues 28-80 (DMWSTQDLYDNPVTAVFQYEGLWRSCVQQSSGFTECRPYLTILGLPAMLQAVR) lie on the Extracellular side of the membrane. A helical transmembrane segment spans residues 81–101 (ALMIVGIVLSVIGLLVAIFAL). At 102 to 122 (KCIRMGNMDDSAKAKMTLTSG) the chain is on the cytoplasmic side. The chain crosses the membrane as a helical span at residues 123–143 (IMFIIAGLCAIAGVSVFANML). The Extracellular portion of the chain corresponds to 144–174 (VTNFWMSTASMFTSMGGMVQTVQTRYTFGAA). Residues 175–195 (LFVGWVAGGLTLIGGVLMCIA) traverse the membrane as a helical segment. Positions 195 to 261 (ACRGLAPEET…QSPPSKYDYV (67 aa)) are required for role in regulation of RANKL-induced osteoclast differentiation. Topologically, residues 196–261 (CRGLAPEETN…QSPPSKYDYV (66 aa)) are cytoplasmic. A Phosphoserine modification is found at Ser-214. The tract at residues 228–261 (SSGFESNTRNKKIYDGGARTEDEGQSPPSKYDYV) is disordered. The span at 239–249 (KIYDGGARTED) shows a compositional bias: basic and acidic residues.

This sequence belongs to the claudin family. As to quaternary structure, interacts with TJP2/ZO-2. Interacts with TJP1/ZO-1. Interacts with YAP1 (phosphorylated); the interaction sequesters YAP1 away from the nucleus and thereby restricts transcription of YAP1 target genes. Interacts with CLDN19.

Its subcellular location is the cell junction. The protein localises to the tight junction. It localises to the cell membrane. Involved in alveolar fluid homeostasis via regulation of alveolar epithelial tight junction composition and therefore ion transport and solute permeability, potentially via downstream regulation of the actin cytoskeleton organization and beta-2-adrenergic signaling. Required for lung alveolarization and maintenance of the paracellular alveolar epithelial barrier. Acts to maintain epithelial progenitor cell proliferation and organ size, via regulation of YAP1 localization away from the nucleus and thereby restriction of YAP1 target gene transcription. Acts as a negative regulator of RANKL-induced osteoclast differentiation, potentially via relocation of TJP2/ZO-2 away from the nucleus, subsequently involved in bone resorption in response to calcium deficiency. Mediates the osteoprotective effects of estrogen, potentially via acting downstream of estrogen signaling independently of RANKL signaling pathways. The sequence is that of Claudin-18 (CLDN18) from Bos taurus (Bovine).